The chain runs to 146 residues: Ribonuclease H (146 aa).

Positions 1 to 143 (MQKKIIVYTD…CDELARQAIK (143 aa)) constitute an RNase H type-1 domain. Residues aspartate 10, glutamate 48, aspartate 70, and aspartate 135 each contribute to the Mg(2+) site.

The protein belongs to the RNase H family. As to quaternary structure, monomer. Mg(2+) serves as cofactor.

The protein resides in the cytoplasm. It catalyses the reaction Endonucleolytic cleavage to 5'-phosphomonoester.. In terms of biological role, endonuclease that specifically degrades the RNA of RNA-DNA hybrids. The sequence is that of Ribonuclease H from Chlorobium phaeobacteroides (strain DSM 266 / SMG 266 / 2430).